We begin with the raw amino-acid sequence, 508 residues long: MAAIGVHLGCTCACVAVYKDGRADVVANDAGDRVTPAVVGFLEKETIVGLAAKQSRVRNATNTIVKVKQILGRSYGDPHTQKHISESKCIVVEKVGKPKYEIDTGETQKFVSSEDVAKLIFSKMKETAQSALGSDVNDVVITVPFDFGESQKKALGEAATAAGFSILRMIHEPSAALLAYGIGQESPTGKSNVLVYKLGGTSLSVTVIEVNSGIYRVLATSTYDDIGGICFTEALAQHLASEFQRTYKQDIRGNARAMMKLMNSADVAKHALSTLGSSNCFVDSLYDGIDFDCNVSRARFELICSSLFNQCIDPIKKLLEQIGFKANDVNQVVLCGGSARIPKLQQLIKDLFPEVEMLSSIPPDEVIPVGAAIQAGILIGKENLSTDLDTITIECSASDILVKETDESGDNKFTVLLPSGTPLPARRQHVLQAPGHISSVCLELYESGGKSPVESKFAQIVLKDLQKKASGVHDILTVLTMKRDGSLHITCTDKDSGKSEMITVEETP.

It belongs to the heat shock protein 70 family. In terms of assembly, component of ribosome-associated complex (RAC).

Its subcellular location is the cytoplasm. The protein resides in the cytosol. Functionally, component of the ribosome-associated complex (RAC), a complex involved in folding or maintaining nascent polypeptides in a folding-competent state. The protein is Heat shock 70 kDa protein 14 (hspa14) of Xenopus tropicalis (Western clawed frog).